Here is a 589-residue protein sequence, read N- to C-terminus: RNA-directed RNA polymerase subunit beta (589 aa).

In terms of domain architecture, RdRp catalytic spans 259-391 (RRAHEGSVTN…TNTKKTFSEG (133 aa)). Residues Asp-274, Asp-359, and Asp-360 each coordinate Mg(2+).

Homodimer; the replicase complex can dimerize. Part of the viral RNA-dependent RNA polymerase complex, the other subunits are the host ribosomal protein S1, EF-Tu and EF-Ts. S1 is needed for the initiation of genomic RNA (+)-strand replication. Mg(2+) serves as cofactor.

The enzyme catalyses RNA(n) + a ribonucleoside 5'-triphosphate = RNA(n+1) + diphosphate. Its function is as follows. This is the catalytic subunit of the viral RNA-dependent RNA polymerase complex. This complex is involved in viral RNA replication that produces (+)-stranded genomes via a complementary, (-)-stranded intermediate. Binds RNA cooperatively with the host ribosomal protein S1. The protein is RNA-directed RNA polymerase subunit beta of Escherichia coli (Bacteriophage Q-beta).